The chain runs to 190 residues: MASPDALINLTNQFLIAMPGMADSTFSGTVVYMCEHNERGALGLVINRPIDIDLATLFDKIDLKLEIHPLAEQSVYYGGPVQTERGFVLHDATGAYSSSLAVPGGLEMTTSKDVLEAVAQGGGPHRFILTLGYAGWSAGQLEDEISRNGWLTVQADPEIIFNVPPEERFAAALNLLGINPAMLSGEAGHA.

Belongs to the UPF0301 (AlgH) family.

This chain is UPF0301 protein Rpic_0619, found in Ralstonia pickettii (strain 12J).